The following is a 117-amino-acid chain: Holo-[acyl-carrier-protein] synthase (117 aa).

Mg(2+)-binding residues include D8 and E58.

This sequence belongs to the P-Pant transferase superfamily. AcpS family. The cofactor is Mg(2+).

It localises to the cytoplasm. The catalysed reaction is apo-[ACP] + CoA = holo-[ACP] + adenosine 3',5'-bisphosphate + H(+). Functionally, transfers the 4'-phosphopantetheine moiety from coenzyme A to a Ser of acyl-carrier-protein. The polypeptide is Holo-[acyl-carrier-protein] synthase (Latilactobacillus sakei subsp. sakei (strain 23K) (Lactobacillus sakei subsp. sakei)).